The following is a 91-amino-acid chain: Putative membrane protein insertion efficiency factor (91 aa).

The protein belongs to the UPF0161 family.

The protein localises to the cell inner membrane. Could be involved in insertion of integral membrane proteins into the membrane. The protein is Putative membrane protein insertion efficiency factor of Saccharophagus degradans (strain 2-40 / ATCC 43961 / DSM 17024).